A 150-amino-acid chain; its full sequence is D-aminoacyl-tRNA deacylase (150 aa).

Positions 138–139 (GP) match the Gly-cisPro motif, important for rejection of L-amino acids motif.

The protein belongs to the DTD family. In terms of assembly, homodimer.

It is found in the cytoplasm. It catalyses the reaction glycyl-tRNA(Ala) + H2O = tRNA(Ala) + glycine + H(+). The enzyme catalyses a D-aminoacyl-tRNA + H2O = a tRNA + a D-alpha-amino acid + H(+). In terms of biological role, an aminoacyl-tRNA editing enzyme that deacylates mischarged D-aminoacyl-tRNAs. Also deacylates mischarged glycyl-tRNA(Ala), protecting cells against glycine mischarging by AlaRS. Acts via tRNA-based rather than protein-based catalysis; rejects L-amino acids rather than detecting D-amino acids in the active site. By recycling D-aminoacyl-tRNA to D-amino acids and free tRNA molecules, this enzyme counteracts the toxicity associated with the formation of D-aminoacyl-tRNA entities in vivo and helps enforce protein L-homochirality. The polypeptide is D-aminoacyl-tRNA deacylase (Petrotoga mobilis (strain DSM 10674 / SJ95)).